We begin with the raw amino-acid sequence, 76 residues long: Defensin-like protein 71 (76 aa).

An N-terminal signal peptide occupies residues 1-22 (MAMTQVFVIFILLATSLCNSNA). 4 disulfides stabilise this stretch: cysteine 36/cysteine 74, cysteine 40/cysteine 63, cysteine 49/cysteine 72, and cysteine 53/cysteine 73.

The protein belongs to the DEFL family.

The protein localises to the secreted. The chain is Defensin-like protein 71 (LCR84) from Arabidopsis thaliana (Mouse-ear cress).